The primary structure comprises 186 residues: Probable nicotinate-nucleotide adenylyltransferase (186 aa).

This sequence belongs to the NadD family.

The catalysed reaction is nicotinate beta-D-ribonucleotide + ATP + H(+) = deamido-NAD(+) + diphosphate. It participates in cofactor biosynthesis; NAD(+) biosynthesis; deamido-NAD(+) from nicotinate D-ribonucleotide: step 1/1. Catalyzes the reversible adenylation of nicotinate mononucleotide (NaMN) to nicotinic acid adenine dinucleotide (NaAD). In Tropheryma whipplei (strain Twist) (Whipple's bacillus), this protein is Probable nicotinate-nucleotide adenylyltransferase.